Reading from the N-terminus, the 250-residue chain is AA9 family lytic polysaccharide monooxygenase AA17 (250 aa).

The signal sequence occupies residues 1–21 (MAMSKIVSLTGLLASASLVAG). Positions 22 and 107 each coordinate Cu(2+). 2 disulfide bridges follow: cysteine 77/cysteine 199 and cysteine 118/cysteine 122. A glycan (N-linked (GlcNAc...) asparagine) is linked at asparagine 159. Histidine 185 and glutamine 194 together coordinate O2. Tyrosine 196 contacts Cu(2+).

The protein belongs to the polysaccharide monooxygenase AA9 family. Cu(2+) serves as cofactor.

The protein resides in the secreted. Functionally, lytic polysaccharide monooxygenase (LPMO) that exhibits oxidative cleavage beta-O-4 linkage of lignin resulting in the formation of aromatic compound guaiacol. Catalysis by LPMOs requires the reduction of the active-site copper from Cu(II) to Cu(I) by a reducing agent and H(2)O(2) or O(2) as a cosubstrate. Does not use cellulose, cello-oligosaccharides, xyloglucan, xylan, chitin nor starch as substrates. Able to depolymerize the lignin dimer guaicyl glycerol beta-guaicyl ether (GGE). The sequence is that of AA9 family lytic polysaccharide monooxygenase AA17 from Aspergillus oryzae (strain ATCC 42149 / RIB 40) (Yellow koji mold).